The following is a 133-amino-acid chain: uncharacterized protein (133 aa).

This is an uncharacterized protein from Caenorhabditis elegans.